We begin with the raw amino-acid sequence, 432 residues long: uncharacterized protein (432 aa).

Residues 223 to 432 (ASAVRGEALF…KDLIEYLKTR (210 aa)) enclose the Cytochrome c domain. Residues C236, C239, and H240 each coordinate heme c.

This is an uncharacterized protein from Sinorhizobium fredii (strain NBRC 101917 / NGR234).